The chain runs to 184 residues: Potassium-transporting ATPase KdpC subunit (184 aa).

Residues 6 to 26 (TAVLYTIISAVFLGLGYPLIM) form a helical membrane-spanning segment.

This sequence belongs to the KdpC family. The system is composed of three essential subunits: KdpA, KdpB and KdpC.

It localises to the cell inner membrane. Its function is as follows. Part of the high-affinity ATP-driven potassium transport (or Kdp) system, which catalyzes the hydrolysis of ATP coupled with the electrogenic transport of potassium into the cytoplasm. This subunit acts as a catalytic chaperone that increases the ATP-binding affinity of the ATP-hydrolyzing subunit KdpB by the formation of a transient KdpB/KdpC/ATP ternary complex. This chain is Potassium-transporting ATPase KdpC subunit, found in Acidobacterium capsulatum (strain ATCC 51196 / DSM 11244 / BCRC 80197 / JCM 7670 / NBRC 15755 / NCIMB 13165 / 161).